The following is a 250-amino-acid chain: 5'-nucleotidase SurE (250 aa).

Aspartate 8, aspartate 9, serine 39, and asparagine 95 together coordinate a divalent metal cation.

The protein belongs to the SurE nucleotidase family. A divalent metal cation is required as a cofactor.

It localises to the cytoplasm. It catalyses the reaction a ribonucleoside 5'-phosphate + H2O = a ribonucleoside + phosphate. Its function is as follows. Nucleotidase that shows phosphatase activity on nucleoside 5'-monophosphates. The protein is 5'-nucleotidase SurE of Syntrophobacter fumaroxidans (strain DSM 10017 / MPOB).